A 394-amino-acid chain; its full sequence is Obg-like ATPase 1 (394 aa).

The 258-residue stretch at 25–282 (LKIGIVGLPN…MPPDEAAKYC (258 aa)) folds into the OBG-type G domain. Residues 34 to 39 (NVGKST), 56 to 60 (FCTID), and 94 to 97 (DIAG) contribute to the ATP site. 34–39 (NVGKST) is a GTP binding site. Mg(2+)-binding residues include Ser-38 and Thr-58. GTP contacts are provided by Phe-129 and Asn-230. Residues 230–231 (NM), Met-231, and 263–265 (SCA) contribute to the ATP site. Residue 263–265 (SCA) participates in GTP binding. In terms of domain architecture, TGS spans 303-386 (HLIYFFTAGP…QDGDIIFFKF (84 aa)).

It belongs to the TRAFAC class OBG-HflX-like GTPase superfamily. OBG GTPase family. YchF/OLA1 subfamily. Monomer (Potential). Interacts with GAP1. The cofactor is Mg(2+).

It localises to the cell membrane. Its subcellular location is the cytoplasm. The protein localises to the cytosol. Activated by GAP1. In terms of biological role, hydrolyzes ATP, and can also hydrolyze GTP with lower efficiency. Has lower affinity for GTP (Potential). Exhibits GTPase activity. Exhibits similar binding affinities and hydrolytic activities toward both GTP and ATP. Binds to the 26 S ribosomal RNA in vitro, but not to the 5.8 S or 18 S rRNA. Confers sensitivity to salinity stress by suppressing the anti-oxidation enzymatic activities and increasing lipid peroxidation thus leading to the accumulation of reactive oxygen species (ROS). The protein is Obg-like ATPase 1 of Oryza sativa subsp. japonica (Rice).